Reading from the N-terminus, the 216-residue chain is Histidine biosynthesis bifunctional protein HisIE (216 aa).

Residues 1–127 form a phosphoribosyl-AMP cyclohydrolase region; that stretch reads MSFIDSLSPQ…GKIVAPPGDT (127 aa). Positions 128–216 are phosphoribosyl-ATP pyrophosphohydrolase; it reads LSQVFQVICD…VYRKLQERRR (89 aa).

This sequence in the N-terminal section; belongs to the PRA-CH family. In the C-terminal section; belongs to the PRA-PH family.

It is found in the cytoplasm. It catalyses the reaction 1-(5-phospho-beta-D-ribosyl)-ATP + H2O = 1-(5-phospho-beta-D-ribosyl)-5'-AMP + diphosphate + H(+). The catalysed reaction is 1-(5-phospho-beta-D-ribosyl)-5'-AMP + H2O = 1-(5-phospho-beta-D-ribosyl)-5-[(5-phospho-beta-D-ribosylamino)methylideneamino]imidazole-4-carboxamide. It functions in the pathway amino-acid biosynthesis; L-histidine biosynthesis; L-histidine from 5-phospho-alpha-D-ribose 1-diphosphate: step 2/9. The protein operates within amino-acid biosynthesis; L-histidine biosynthesis; L-histidine from 5-phospho-alpha-D-ribose 1-diphosphate: step 3/9. This is Histidine biosynthesis bifunctional protein HisIE (hisI) from Nostoc sp. (strain PCC 7120 / SAG 25.82 / UTEX 2576).